An 825-amino-acid polypeptide reads, in one-letter code: AMP deaminase 2 (825 aa).

The segment at 1–49 is disordered; the sequence is MASYPSGSGKPKAKYPFKKRASLQASTAAPEARGGLGAPPLQSARSLPG. Basic residues predominate over residues 11-21; that stretch reads PKAKYPFKKRA. Serine 22 carries the post-translational modification Phosphoserine. Arginine 45 carries the omega-N-methylarginine modification. Phosphoserine occurs at positions 46, 64, and 80. Tyrosine 91 is modified (phosphotyrosine). A phosphoserine mark is found at serine 97 and serine 114. Threonine 134 bears the Phosphothreonine mark. Phosphoserine is present on residues serine 136 and serine 138. Residues histidine 364 and histidine 366 each coordinate Zn(2+). Residues histidine 366 and 435-440 contribute to the substrate site; that span reads KFNAKY. Histidine 633 serves as a coordination point for Zn(2+). Substrate is bound at residue glutamate 636. The Proton acceptor role is filled by histidine 655. Aspartate 710 provides a ligand contact to Zn(2+). A substrate-binding site is contributed by 711–714; it reads DPLQ.

Belongs to the metallo-dependent hydrolases superfamily. Adenosine and AMP deaminases family. As to quaternary structure, homotetramer. Zn(2+) is required as a cofactor. As to expression, highly expressed in cerebellum.

It carries out the reaction AMP + H2O + H(+) = IMP + NH4(+). It functions in the pathway purine metabolism; IMP biosynthesis via salvage pathway; IMP from AMP: step 1/1. Its function is as follows. AMP deaminase plays a critical role in energy metabolism. Catalyzes the deamination of AMP to IMP and plays an important role in the purine nucleotide cycle. The polypeptide is AMP deaminase 2 (Homo sapiens (Human)).